A 240-amino-acid polypeptide reads, in one-letter code: Heme oxygenase 1 (240 aa).

Positions 10, 17, 125, 168, and 172 each coordinate heme b.

The protein belongs to the heme oxygenase family.

The catalysed reaction is heme b + 3 reduced [NADPH--hemoprotein reductase] + 3 O2 = biliverdin IXalpha + CO + Fe(2+) + 3 oxidized [NADPH--hemoprotein reductase] + 3 H2O + H(+). In terms of biological role, catalyzes the opening of the heme ring with the release of iron. Key enzyme in the synthesis of the chromophoric part of the photosynthetic antennae. The sequence is that of Heme oxygenase 1 (pbsA1) from Synechocystis sp. (strain ATCC 27184 / PCC 6803 / Kazusa).